We begin with the raw amino-acid sequence, 173 residues long: MKKLLPLAVLAALSSVHVASAQAADVSAAVGATGQSGMTYRLGLSWDWDKSWWQTSTGRLTGYWDAGYTYWEGGDEGAGKHSLSFAPVFVYEFAGDSIKPFIEAGIGVAAFSGTRVGDQNLGSSLNFEDRIGAGLKFANGQSVGVRAIHYSNAGLKQPNDGIESYSLFYKIPI.

An N-terminal signal peptide occupies residues 1-23; sequence MKKLLPLAVLAALSSVHVASAQA. The Periplasmic portion of the chain corresponds to 25 to 28; that stretch reads DVSA. The beta stranded transmembrane segment at 29 to 32 threads the bilayer; it reads AVGA. A topological domain (periplasmic) is located at residue Thr-33. Residues 34 to 49 traverse the membrane as a beta stranded segment; sequence GQSGMTYRLGLSWDWD. Residues 50–56 are Extracellular-facing; the sequence is KSWWQTS. Residues 57–71 form a beta stranded membrane-spanning segment; sequence TGRLTGYWDAGYTYW. At 72–73 the chain is on the periplasmic side; the sequence is EG. The chain crosses the membrane as a beta stranded span at residues 74 to 89; sequence GDEGAGKHSLSFAPVF. Residue Val-90 is a topological domain, extracellular. A beta stranded transmembrane segment spans residues 91–93; it reads YEF. Residues 94-95 lie on the Periplasmic side of the membrane; the sequence is AG. Residues 96–98 form a beta stranded membrane-spanning segment; it reads DSI. Residues 99–100 are Extracellular-facing; the sequence is KP. Residues 101–115 form a beta stranded membrane-spanning segment; that stretch reads FIEAGIGVAAFSGTR. Over 116 to 117 the chain is Periplasmic; it reads VG. The chain crosses the membrane as a beta stranded span at residues 118–128; sequence DQNLGSSLNFE. The Extracellular portion of the chain corresponds to 129-138; that stretch reads DRIGAGLKFA. Residues 139-148 traverse the membrane as a beta stranded segment; sequence NGQSVGVRAI. Catalysis depends on charge relay system residues His-149, Ser-151, and Glu-163. Topologically, residues 149 to 173 are periplasmic; sequence HYSNAGLKQPNDGIESYSLFYKIPI.

It belongs to the PagL family. Homodimer.

The protein resides in the cell outer membrane. It carries out the reaction a 3-(acyloxy)acyl derivative of bacterial toxin + H2O = a 3-hydroxyacyl derivative of bacterial toxin + a fatty acid + H(+). Its activity is regulated as follows. Decreased activity at low temperatures (15 or 21 degrees Celsius). Has lipid A 3-O-deacylase activity. Hydrolyzes the ester bond at the 3 position of lipid A, a bioactive component of lipopolysaccharide (LPS), thereby releasing the primary fatty acyl moiety. Lacks fatty acyl chain-length specificity as removes both 3-OH C10 and 3-OH C14 fatty acids from lipid A. The sequence is that of Lipid A deacylase PagL from Pseudomonas aeruginosa (strain ATCC 15692 / DSM 22644 / CIP 104116 / JCM 14847 / LMG 12228 / 1C / PRS 101 / PAO1).